We begin with the raw amino-acid sequence, 512 residues long: GMP synthase [glutamine-hydrolyzing] (512 aa).

Residues 7-197 (TIIVLDFGSQ…VFGVCGCSEG (191 aa)) enclose the Glutamine amidotransferase type-1 domain. Catalysis depends on Cys84, which acts as the Nucleophile. Residues His171 and Glu173 contribute to the active site. The GMPS ATP-PPase domain occupies 198-387 (WNMENFIEVE…LGIPDEIVWR (190 aa)). 225-231 (SGGVDSS) contributes to the ATP binding site.

Homodimer.

The enzyme catalyses XMP + L-glutamine + ATP + H2O = GMP + L-glutamate + AMP + diphosphate + 2 H(+). It participates in purine metabolism; GMP biosynthesis; GMP from XMP (L-Gln route): step 1/1. Catalyzes the synthesis of GMP from XMP. The sequence is that of GMP synthase [glutamine-hydrolyzing] from Bacillus cereus (strain B4264).